A 412-amino-acid polypeptide reads, in one-letter code: DNA replication and repair protein RecF (412 aa).

An ATP-binding site is contributed by 30–37; sequence GKNGLGKT.

The protein belongs to the RecF family.

The protein resides in the cytoplasm. Functionally, the RecF protein is involved in DNA metabolism; it is required for DNA replication and normal SOS inducibility. RecF binds preferentially to single-stranded, linear DNA. It also seems to bind ATP. The protein is DNA replication and repair protein RecF of Bifidobacterium longum subsp. infantis (strain ATCC 15697 / DSM 20088 / JCM 1222 / NCTC 11817 / S12).